A 378-amino-acid chain; its full sequence is uncharacterized protein (378 aa).

This sequence belongs to the IIV-6 329R family.

This is an uncharacterized protein from Acheta domesticus (House cricket).